Reading from the N-terminus, the 139-residue chain is Nucleoside diphosphate kinase (139 aa).

Residues Lys-10, Phe-58, Arg-86, Thr-92, Arg-103, and Asn-113 each coordinate ATP. His-116 (pros-phosphohistidine intermediate) is an active-site residue.

Belongs to the NDK family. As to quaternary structure, homotetramer. It depends on Mg(2+) as a cofactor.

Its subcellular location is the cytoplasm. The enzyme catalyses a 2'-deoxyribonucleoside 5'-diphosphate + ATP = a 2'-deoxyribonucleoside 5'-triphosphate + ADP. It carries out the reaction a ribonucleoside 5'-diphosphate + ATP = a ribonucleoside 5'-triphosphate + ADP. Its function is as follows. Major role in the synthesis of nucleoside triphosphates other than ATP. The ATP gamma phosphate is transferred to the NDP beta phosphate via a ping-pong mechanism, using a phosphorylated active-site intermediate. The protein is Nucleoside diphosphate kinase of Nitratidesulfovibrio vulgaris (strain DSM 19637 / Miyazaki F) (Desulfovibrio vulgaris).